A 1032-amino-acid chain; its full sequence is Y' element ATP-dependent helicase YPR204W (1032 aa).

A Helicase ATP-binding domain is found at 1-175 (MADTPSVAVQ…LQRIGLTGLA (175 aa)). An ATP-binding site is contributed by 11–18 (APPGYGKT). Residues 121 to 124 (DEFH) carry the DEAH box motif. Positions 232–381 (KLLLALFEIE…EFYGLESKKG (150 aa)) constitute a Helicase C-terminal domain. Positions 455 to 634 (ANASTNATTN…ATTTESTNAS (180 aa)) are enriched in low complexity. Residues 455 to 658 (ANASTNATTN…RFHPVTDINK (204 aa)) form a disordered region. Basic and acidic residues predominate over residues 635–658 (AKEDANKDGNAEDNRFHPVTDINK).

Belongs to the helicase family. Yeast subtelomeric Y' repeat subfamily.

In terms of biological role, catalyzes DNA unwinding and is involved in telomerase-independent telomere maintenance. The sequence is that of Y' element ATP-dependent helicase YPR204W from Saccharomyces cerevisiae (strain ATCC 204508 / S288c) (Baker's yeast).